The sequence spans 436 residues: Enolase (436 aa).

Gln-167 provides a ligand contact to (2R)-2-phosphoglycerate. The active-site Proton donor is Glu-209. Residues Asp-246, Glu-291, and Asp-318 each contribute to the Mg(2+) site. Lys-343, Arg-372, Ser-373, and Lys-394 together coordinate (2R)-2-phosphoglycerate. The active-site Proton acceptor is Lys-343.

It belongs to the enolase family. As to quaternary structure, component of the RNA degradosome, a multiprotein complex involved in RNA processing and mRNA degradation. Mg(2+) serves as cofactor.

The protein resides in the cytoplasm. Its subcellular location is the secreted. The protein localises to the cell surface. The enzyme catalyses (2R)-2-phosphoglycerate = phosphoenolpyruvate + H2O. It functions in the pathway carbohydrate degradation; glycolysis; pyruvate from D-glyceraldehyde 3-phosphate: step 4/5. Functionally, catalyzes the reversible conversion of 2-phosphoglycerate (2-PG) into phosphoenolpyruvate (PEP). It is essential for the degradation of carbohydrates via glycolysis. The protein is Enolase of Haemophilus influenzae (strain PittEE).